A 458-amino-acid polypeptide reads, in one-letter code: Transcription factor ORF10 (458 aa).

The segment at residues 38–65 (CESCRLKKLRCSGHKSGCDRCRSQAMKC) is a DNA-binding region (zn(2)-C6 fungal-type). The segment at 69–109 (IGAPSNSSRPKSRSHFQPNFSNMSGTAGTSKAPSPLGNDGV) is disordered. Positions 71–100 (APSNSSRPKSRSHFQPNFSNMSGTAGTSKA) are enriched in polar residues.

The protein resides in the nucleus. Its function is as follows. Transcription factor that specifically regulates the expression of the gene cluster that mediates the biosynthesis of PR-toxin, a bicyclic sesquiterpene belonging to the eremophilane class and acting as a mycotoxin. The sequence is that of Transcription factor ORF10 from Penicillium roqueforti (strain FM164).